The chain runs to 564 residues: Solute carrier family 22 member 21 (564 aa).

Residues 1-20 (MLDYDEVTAFLGEWGTFQRL) are Cytoplasmic-facing. A helical membrane pass occupies residues 21-41 (IFFLLSASIIPNGFTGLSAVF). Over 42 to 142 (LTAIPEHRCR…DLVCKDDWKA (101 aa)) the chain is Extracellular. Asparagine 57, asparagine 64, and asparagine 91 each carry an N-linked (GlcNAc...) asparagine glycan. A helical transmembrane segment spans residues 143-163 (PLTTSFFYVGVLLGSFISGQL). Topologically, residues 164–172 (SDRFGRKNI) are cytoplasmic. Residues 173–193 (LFLTMAMHTGFSFIQVFSVNF) traverse the membrane as a helical segment. The Extracellular segment spans residues 194-197 (EMFT). A helical transmembrane segment spans residues 198-218 (LLYTLVGMGHISNYVAAFVLG). Residue 218–225 (GTEMLSKS) participates in ATP binding. The Cytoplasmic segment spans residues 219–232 (TEMLSKSVRIIFAT). The helical transmembrane segment at 233-253 (LGVCIFFAFGFMVLPLFAYFI) threads the bilayer. The Extracellular portion of the chain corresponds to 254–257 (REWR). A helical transmembrane segment spans residues 258-278 (RLLLAITLPGVLCGALWWFIP). The Cytoplasmic segment spans residues 279 to 344 (ESPRWLISQG…YDLVRTPNIR (66 aa)). The chain crosses the membrane as a helical span at residues 345-365 (ILTIMSIILWLTISVGYFGLS). At 366–376 (LDTPNLNGNIY) the chain is on the extracellular side. Residues 377–397 (VNCFLLAAVEVPAYVLAWLLL) form a helical membrane-spanning segment. The Cytoplasmic segment spans residues 398–409 (QHVSRRYSMAGS). The helical transmembrane segment at 410 to 430 (LFLGGSVLLLVQLVPSDLHYL) threads the bilayer. The Extracellular segment spans residues 431–433 (STT). A helical transmembrane segment spans residues 434–454 (LVMVGKFGITSAYSMVYVYTA). The Cytoplasmic portion of the chain corresponds to 455–465 (ELYPTVVRNMG). Residues 466–486 (VGVSSTASRLGSILSPYFVYL) form a helical membrane-spanning segment. Residues 487-491 (GAYDR) are Extracellular-facing. Residues 492-512 (RLPYILMGSLTILTAIITLFF) form a helical membrane-spanning segment. Residues 513 to 564 (PESSGVSLPETIDEMQKVKKLKQRQSLSKKGSPKESKGNVSRTSRTSEPKGF) are Cytoplasmic-facing. Positions 532-564 (KLKQRQSLSKKGSPKESKGNVSRTSRTSEPKGF) are disordered.

The protein belongs to the major facilitator (TC 2.A.1) superfamily. Organic cation transporter (TC 2.A.1.19) family. In terms of tissue distribution, predominantly expressed in testis.

The protein localises to the peroxisome membrane. Its function is as follows. Sodium-ion independent, medium affinity carnitine transporter. Also transports organic cations such as tetraethylammonium (TEA) without the involvement of sodium. Relative uptake activity ratio of carnitine to TEA is 746. The chain is Solute carrier family 22 member 21 (Slc22a21) from Mus musculus (Mouse).